Consider the following 542-residue polypeptide: Putative beta-glucosidase 23 (542 aa).

The signal sequence occupies residues M1–A29. A glycan (N-linked (GlcNAc...) asparagine) is linked at N34. An a beta-D-glucoside-binding site is contributed by Q88. Residue N135 is glycosylated (N-linked (GlcNAc...) asparagine). H216 provides a ligand contact to a beta-D-glucoside. The active-site Proton donor is the E262. Cysteines 281 and 289 form a disulfide. Y405 serves as a coordination point for a beta-D-glucoside. An N-linked (GlcNAc...) asparagine glycan is attached at N445. Positions 476 and 492 each coordinate a beta-D-glucoside.

This sequence belongs to the glycosyl hydrolase 1 family.

It carries out the reaction Hydrolysis of terminal, non-reducing beta-D-glucosyl residues with release of beta-D-glucose.. The polypeptide is Putative beta-glucosidase 23 (BGLU23) (Oryza sativa subsp. japonica (Rice)).